We begin with the raw amino-acid sequence, 155 residues long: 6,7-dimethyl-8-ribityllumazine synthase (155 aa).

Residues Phe24, Ala58–Glu60, and Ala82–Ile84 each bind 5-amino-6-(D-ribitylamino)uracil. A (2S)-2-hydroxy-3-oxobutyl phosphate-binding site is contributed by Ala87–Thr88. The Proton donor role is filled by His90. Residue Phe115 participates in 5-amino-6-(D-ribitylamino)uracil binding. Position 129 (Arg129) interacts with (2S)-2-hydroxy-3-oxobutyl phosphate.

The protein belongs to the DMRL synthase family.

It carries out the reaction (2S)-2-hydroxy-3-oxobutyl phosphate + 5-amino-6-(D-ribitylamino)uracil = 6,7-dimethyl-8-(1-D-ribityl)lumazine + phosphate + 2 H2O + H(+). Its pathway is cofactor biosynthesis; riboflavin biosynthesis; riboflavin from 2-hydroxy-3-oxobutyl phosphate and 5-amino-6-(D-ribitylamino)uracil: step 1/2. Functionally, catalyzes the formation of 6,7-dimethyl-8-ribityllumazine by condensation of 5-amino-6-(D-ribitylamino)uracil with 3,4-dihydroxy-2-butanone 4-phosphate. This is the penultimate step in the biosynthesis of riboflavin. The chain is 6,7-dimethyl-8-ribityllumazine synthase from Prosthecochloris aestuarii (strain DSM 271 / SK 413).